We begin with the raw amino-acid sequence, 307 residues long: ATP synthase gamma chain (307 aa).

It belongs to the ATPase gamma chain family. F-type ATPases have 2 components, CF(1) - the catalytic core - and CF(0) - the membrane proton channel. CF(1) has five subunits: alpha(3), beta(3), gamma(1), delta(1), epsilon(1). CF(0) has three main subunits: a, b and c.

The protein localises to the cell membrane. In terms of biological role, produces ATP from ADP in the presence of a proton gradient across the membrane. The gamma chain is believed to be important in regulating ATPase activity and the flow of protons through the CF(0) complex. The sequence is that of ATP synthase gamma chain from Mycolicibacterium smegmatis (strain ATCC 700084 / mc(2)155) (Mycobacterium smegmatis).